We begin with the raw amino-acid sequence, 409 residues long: TNF receptor-associated factor family protein DDB_G0273435/DDB_G0273505 (409 aa).

An RING-type; degenerate zinc finger spans residues 20-59; it reads CQLCCNLMNESVSCPNGHCLCKGCFHKQIETVKSECPICC. TRAF-type zinc fingers lie at residues 75–145 and 145–201; these read KHIN…EIEN and NHQD…HELS. A coiled-coil region spans residues 221-250; that stretch reads HQSLLKSTSKQLKQLRSSCEELETKLINND. An MATH domain is found at 252-380; it reads SFNGRWIIKQ…NDQLIIKFNI (129 aa).

It belongs to the TNF receptor-associated factor family. A subfamily.

The protein resides in the cytoplasm. Its function is as follows. Probable adapter protein and signal transducer that links members of the tumor necrosis factor receptor family to different signaling pathways by association with the receptor cytoplasmic domain and kinases. In Dictyostelium discoideum (Social amoeba), this protein is TNF receptor-associated factor family protein DDB_G0273435/DDB_G0273505.